A 165-amino-acid polypeptide reads, in one-letter code: Ribosome maturation factor RimM (165 aa).

A PRC barrel domain is found at 90 to 161; sequence EDEYFIVDLV…LITIRPSGEW (72 aa).

It belongs to the RimM family. Binds ribosomal protein uS19.

The protein resides in the cytoplasm. Functionally, an accessory protein needed during the final step in the assembly of 30S ribosomal subunit, possibly for assembly of the head region. Essential for efficient processing of 16S rRNA. May be needed both before and after RbfA during the maturation of 16S rRNA. It has affinity for free ribosomal 30S subunits but not for 70S ribosomes. The polypeptide is Ribosome maturation factor RimM (Clostridium perfringens (strain SM101 / Type A)).